A 382-amino-acid polypeptide reads, in one-letter code: Na(+)/H(+) antiporter NhaA 2 (382 aa).

12 helical membrane passes run 7–27 (AGGV…NSYL), 28–48 (SGFY…AFEI), 52–72 (LLLW…GLEV), 88–108 (VLPG…YASF), 118–138 (GWAI…SLFG), 147–167 (LFLL…IALF), 170–190 (HELS…LFVL), 206–226 (LVVW…GFVI), 254–274 (VAYF…LGGI), 285–305 (LGII…VCWL), 325–345 (GVCL…SLAF), and 356–376 (VKLG…LILT).

This sequence belongs to the NhaA Na(+)/H(+) (TC 2.A.33) antiporter family.

The protein localises to the cell inner membrane. The enzyme catalyses Na(+)(in) + 2 H(+)(out) = Na(+)(out) + 2 H(+)(in). Functionally, na(+)/H(+) antiporter that extrudes sodium in exchange for external protons. The polypeptide is Na(+)/H(+) antiporter NhaA 2 (Saccharophagus degradans (strain 2-40 / ATCC 43961 / DSM 17024)).